We begin with the raw amino-acid sequence, 482 residues long: Lipoamide acyltransferase component of branched-chain alpha-keto acid dehydrogenase complex, mitochondrial (482 aa).

The N-terminal 61 residues, 1 to 61 (MAAVRMLRTW…HFLKTTAALR (61 aa)), are a transit peptide targeting the mitochondrion. In terms of domain architecture, Lipoyl-binding spans 64–139 (VVQFKLSDIG…YVGKPLVDIE (76 aa)). Lysine 105 carries the post-translational modification N6-lipoyllysine. Residue lysine 133 is modified to N6-succinyllysine. The segment at 145–160 (DSEEDVVETPAVSHDE) is critical for association with PPM1K. The tract at residues 147–168 (EEDVVETPAVSHDEHTHQEIKG) is disordered. Residues 157–168 (SHDEHTHQEIKG) show a composition bias toward basic and acidic residues. Residues 172-209 (LATPAVRRLAMENNIKLSEVVGSGKDGRILKEDILNYL) form the Peripheral subunit-binding (PSBD) domain. Lysine 196 carries the post-translational modification N6-acetyllysine; alternate. Lysine 196 is modified (N6-succinyllysine; alternate). An N6-acetyllysine modification is found at lysine 202. At serine 220 the chain carries Phosphoserine. An N6-acetyllysine mark is found at lysine 243 and lysine 250. Residue lysine 261 is modified to N6-succinyllysine. Lysine 289 carries the N6-acetyllysine; alternate modification. The residue at position 289 (lysine 289) is an N6-succinyllysine; alternate. Residue arginine 291 coordinates CoA. N6-acetyllysine occurs at positions 295 and 304. The CoA site is built by serine 306, aspartate 349, glutamine 378, serine 399, asparagine 400, serine 403, glycine 424, and isoleucine 426. At lysine 435 the chain carries N6-acetyllysine. Lysine 440 carries the post-translational modification N6-acetyllysine; alternate. The residue at position 440 (lysine 440) is an N6-succinyllysine; alternate. Active-site residues include histidine 452 and aspartate 456.

It belongs to the 2-oxoacid dehydrogenase family. As to quaternary structure, forms a 24-polypeptide structural core with octahedral symmetry that represents the E2 component of the branched-chain alpha-ketoacid dehydrogenase (BCKDH) complex. The BCKDH complex is composed of three major building blocks E1, E2 and E3. It is organized around E2, a 24-meric cubic core composed of DBT, to which are associated 6 to 12 copies of E1, and approximately 6 copies of the dehydrogenase E3, a DLD dimer. Interacts with PPM1K with a 24:1 stoichiometry; the N-terminal region (residues 49-61) of PPM1K and C-terminal linker of the lipoyl domain of DBT/E2 (residues 145-160) are critical for this interaction whereas the lipoyl prosthetic group is dispensable. This interaction requires colocalization in mitochondria. PPM1K competes with BCKDK for binding to DBT; this interaction is modulated by branched-chain alpha-keto acids (BCKAs). At steady state, BCKDH holoenzyme preferentially binds BCKDK and BCKDHA is phosphorylated. In response to high levels of BCKAs, BCKDK is replaced by PPM1K leading to BCKDHA dephosphorylation. (R)-lipoate serves as cofactor.

It localises to the mitochondrion matrix. The enzyme catalyses N(6)-[(R)-dihydrolipoyl]-L-lysyl-[protein] + 2-methylpropanoyl-CoA = N(6)-[(R)-S(8)-2-methylpropanoyldihydrolipoyl]-L-lysyl-[protein] + CoA. Its function is as follows. The branched-chain alpha-keto dehydrogenase complex catalyzes the overall conversion of alpha-keto acids to acyl-CoA and CO(2). It contains multiple copies of three enzymatic components: branched-chain alpha-keto acid decarboxylase (E1), lipoamide acyltransferase (E2) and lipoamide dehydrogenase (E3). Within this complex, the catalytic function of this enzyme is to accept, and to transfer to coenzyme A, acyl groups that are generated by the branched-chain alpha-keto acid decarboxylase component. The protein is Lipoamide acyltransferase component of branched-chain alpha-keto acid dehydrogenase complex, mitochondrial of Homo sapiens (Human).